A 156-amino-acid chain; its full sequence is Small ribosomal subunit protein uS7 (156 aa).

It belongs to the universal ribosomal protein uS7 family. As to quaternary structure, part of the 30S ribosomal subunit. Contacts proteins S9 and S11.

Functionally, one of the primary rRNA binding proteins, it binds directly to 16S rRNA where it nucleates assembly of the head domain of the 30S subunit. Is located at the subunit interface close to the decoding center, probably blocks exit of the E-site tRNA. The sequence is that of Small ribosomal subunit protein uS7 from Nitrobacter winogradskyi (strain ATCC 25391 / DSM 10237 / CIP 104748 / NCIMB 11846 / Nb-255).